Consider the following 114-residue polypeptide: Amphinase-2 (114 aa).

Catalysis depends on His15, which acts as the Proton acceptor. Cystine bridges form between Cys26–Cys79, Cys41–Cys85, Cys59–Cys100, and Cys97–Cys114. Residue Asn27 is glycosylated (N-linked (GlcNAc...) asparagine). 42–46 (KPINT) contributes to the substrate binding site. Residues Asn67 and Asn91 are each glycosylated (N-linked (GlcNAc...) asparagine). His107 serves as the catalytic Proton donor.

The protein belongs to the pancreatic ribonuclease family. As to quaternary structure, monomer. Post-translationally, there are at least four different forms arising from glycan heterogeneity.

The protein resides in the secreted. Endonuclease, hydrolyzes highly polymerized RNA, poly(U) and poly(C), and the dinucleotides CpA and UpA. Hydrolyzes 18S and 28S ribosomal RNA. More active towards rCA than rUA or rUG. Has cytotoxic activity against cultured human submaxillary gland carcinoma cells. This chain is Amphinase-2, found in Lithobates pipiens (Northern leopard frog).